The sequence spans 200 residues: 3-isopropylmalate dehydratase small subunit (200 aa).

It belongs to the LeuD family. LeuD type 1 subfamily. In terms of assembly, heterodimer of LeuC and LeuD.

It carries out the reaction (2R,3S)-3-isopropylmalate = (2S)-2-isopropylmalate. Its pathway is amino-acid biosynthesis; L-leucine biosynthesis; L-leucine from 3-methyl-2-oxobutanoate: step 2/4. Catalyzes the isomerization between 2-isopropylmalate and 3-isopropylmalate, via the formation of 2-isopropylmaleate. This chain is 3-isopropylmalate dehydratase small subunit, found in Vibrio campbellii (strain ATCC BAA-1116).